The chain runs to 158 residues: Ribosomal RNA large subunit methyltransferase H (158 aa).

Residues leucine 76, glycine 107, and 126 to 131 each bind S-adenosyl-L-methionine; that span reads LSGLTM.

This sequence belongs to the RNA methyltransferase RlmH family. In terms of assembly, homodimer.

The protein localises to the cytoplasm. The enzyme catalyses pseudouridine(1915) in 23S rRNA + S-adenosyl-L-methionine = N(3)-methylpseudouridine(1915) in 23S rRNA + S-adenosyl-L-homocysteine + H(+). Functionally, specifically methylates the pseudouridine at position 1915 (m3Psi1915) in 23S rRNA. The polypeptide is Ribosomal RNA large subunit methyltransferase H (Teredinibacter turnerae (strain ATCC 39867 / T7901)).